A 197-amino-acid polypeptide reads, in one-letter code: Ribonuclease HII (197 aa).

In terms of domain architecture, RNase H type-2 spans 9 to 197 (KLIAGVDEVG…APVKKALEQF (189 aa)). Residues D15, E16, and D107 each contribute to the a divalent metal cation site.

It belongs to the RNase HII family. Mn(2+) serves as cofactor. Requires Mg(2+) as cofactor.

The protein localises to the cytoplasm. The catalysed reaction is Endonucleolytic cleavage to 5'-phosphomonoester.. Functionally, endonuclease that specifically degrades the RNA of RNA-DNA hybrids. This Haemophilus influenzae (strain PittEE) protein is Ribonuclease HII.